The sequence spans 378 residues: UPF0754 membrane protein BC_0879 (378 aa).

Residues 357–377 (YLGALLGGMIGLVQGLLLLFL) form a helical membrane-spanning segment.

The protein belongs to the UPF0754 family.

Its subcellular location is the cell membrane. The chain is UPF0754 membrane protein BC_0879 from Bacillus cereus (strain ATCC 14579 / DSM 31 / CCUG 7414 / JCM 2152 / NBRC 15305 / NCIMB 9373 / NCTC 2599 / NRRL B-3711).